Consider the following 514-residue polypeptide: 6-phosphofructo-2-kinase/fructose-2,6-bisphosphatase 3 (514 aa).

A 6-phosphofructo-2-kinase region spans residues 1–245; the sequence is MPLELTQSRV…VYYLMNIHVQ (245 aa). 42–50 is a binding site for ATP; it reads GLPARGKTY. Beta-D-fructose 6-phosphate contacts are provided by Arg-75 and Arg-99. Residue Asp-125 is part of the active site. Thr-127 and Arg-133 together coordinate beta-D-fructose 6-phosphate. The active site involves Cys-155. 164–169 provides a ligand contact to ATP; sequence NIMEVK. Beta-D-fructose 6-phosphate-binding residues include Lys-169, Arg-190, and Tyr-194. The segment at 246-514 is fructose-2,6-bisphosphatase; that stretch reads PRTIYLCRHG…QPLLGQACLT (269 aa). Residue Arg-253 coordinates beta-D-fructose 2,6-bisphosphate. His-254 acts as the Tele-phosphohistidine intermediate in catalysis. Residues Asn-260 and Gly-266 each contribute to the beta-D-fructose 2,6-bisphosphate site. Glu-323 (proton donor/acceptor) is an active-site residue. The beta-D-fructose 2,6-bisphosphate site is built by Tyr-334, Arg-348, Lys-352, Tyr-363, Gln-389, and Arg-393. Residue 345–348 participates in ATP binding; the sequence is YALR. Residues 389–393 and Tyr-425 contribute to the ATP site; that span reads QAVLR. Positions 444 to 475 are disordered; sequence ERSEDAKKGPNPLMRRNSVTPLASPEPTKKPR. Phosphoserine; by AMPK and PKA is present on Ser-461. Thr-463 carries the post-translational modification Phosphothreonine. The residue at position 467 (Ser-467) is a Phosphoserine. Residue Thr-471 is modified to Phosphothreonine; by PKC.

This sequence in the C-terminal section; belongs to the phosphoglycerate mutase family. Homodimer. Forms a heterodimer with PFKFB2. Post-translationally, phosphorylation by AMPK stimulates activity.

It catalyses the reaction beta-D-fructose 2,6-bisphosphate + H2O = beta-D-fructose 6-phosphate + phosphate. It carries out the reaction beta-D-fructose 6-phosphate + ATP = beta-D-fructose 2,6-bisphosphate + ADP + H(+). In terms of biological role, catalyzes both the synthesis and degradation of fructose 2,6-bisphosphate. The sequence is that of 6-phosphofructo-2-kinase/fructose-2,6-bisphosphatase 3 (PFKFB3) from Pongo abelii (Sumatran orangutan).